Here is a 572-residue protein sequence, read N- to C-terminus: Sulfite reductase [NADPH] hemoprotein beta-component (572 aa).

[4Fe-4S] cluster contacts are provided by cysteine 437, cysteine 443, cysteine 482, and cysteine 486. Cysteine 486 is a binding site for siroheme.

It belongs to the nitrite and sulfite reductase 4Fe-4S domain family. As to quaternary structure, alpha(8)-beta(8). The alpha component is a flavoprotein, the beta component is a hemoprotein. Requires siroheme as cofactor. [4Fe-4S] cluster is required as a cofactor.

The enzyme catalyses hydrogen sulfide + 3 NADP(+) + 3 H2O = sulfite + 3 NADPH + 4 H(+). The protein operates within sulfur metabolism; hydrogen sulfide biosynthesis; hydrogen sulfide from sulfite (NADPH route): step 1/1. In terms of biological role, component of the sulfite reductase complex that catalyzes the 6-electron reduction of sulfite to sulfide. This is one of several activities required for the biosynthesis of L-cysteine from sulfate. The sequence is that of Sulfite reductase [NADPH] hemoprotein beta-component from Bacillus licheniformis (strain ATCC 14580 / DSM 13 / JCM 2505 / CCUG 7422 / NBRC 12200 / NCIMB 9375 / NCTC 10341 / NRRL NRS-1264 / Gibson 46).